The sequence spans 239 residues: Leucine rich adaptor protein 1 (239 aa).

2 LRR repeats span residues 55–83 (LGDK…LVTL) and 93–114 (LLEE…QYSL). The segment covering 105–116 (SSLTSSQYSLTG) has biased composition (low complexity). The disordered stretch occupies residues 105-138 (SSLTSSQYSLTGGSPGRSRRGSWDSLPDTSSTDR). A phosphoserine mark is found at Ser118, Ser126, and Ser129.

Forms a tripartite complex with CDC42BPA/CDC42BPB and MYO18A acting as an adapter connecting both. Its binding to CDC42BPA/CDC42BPB results in their activation by abolition of their negative autoregulation. Interacts with CDC42BPA and CDC42BPB. Post-translationally, phosphorylated.

It localises to the cytoplasm. Its function is as follows. Acts as an activator of the canonical NF-kappa-B pathway and drive the production of pro-inflammatory cytokines. Promotes the antigen (Ag)-presenting and priming function of dendritic cells via the canonical NF-kappa-B pathway. In concert with MYO18A and CDC42BPA/CDC42BPB, is involved in modulating lamellar actomyosin retrograde flow that is crucial to cell protrusion and migration. Activates CDC42BPA/CDC42BPB and targets it to actomyosin through its interaction with MYO18A, leading to MYL9/MLC2 phosphorylation and MYH9/MYH10-dependent actomyosin assembly in the lamella. This Mus musculus (Mouse) protein is Leucine rich adaptor protein 1 (Lurap1).